Here is a 484-residue protein sequence, read N- to C-terminus: Glutamate--tRNA ligase (484 aa).

A 'HIGH' region motif is present at residues 11-21 (PSPTGLLHIGN). The 'KMSKS' region motif lies at 255 to 259 (KLSKR). An ATP-binding site is contributed by lysine 258.

The protein belongs to the class-I aminoacyl-tRNA synthetase family. Glutamate--tRNA ligase type 1 subfamily. Monomer.

It localises to the cytoplasm. It catalyses the reaction tRNA(Glu) + L-glutamate + ATP = L-glutamyl-tRNA(Glu) + AMP + diphosphate. Its function is as follows. Catalyzes the attachment of glutamate to tRNA(Glu) in a two-step reaction: glutamate is first activated by ATP to form Glu-AMP and then transferred to the acceptor end of tRNA(Glu). This chain is Glutamate--tRNA ligase, found in Streptococcus agalactiae serotype V (strain ATCC BAA-611 / 2603 V/R).